The following is a 559-amino-acid chain: DNA primase (559 aa).

The segment at 37 to 61 (CPFHEERSASFSVNQVKGFYYCFGC) adopts a CHC2-type zinc-finger fold. Residues 246–327 (KQVIVTEGYL…KGGVILFENN (82 aa)) form the Toprim domain. Mg(2+) is bound by residues E252, D296, and D298.

The protein belongs to the DnaG primase family. As to quaternary structure, monomer. Interacts with DnaB. Requires Zn(2+) as cofactor. The cofactor is Mg(2+).

The enzyme catalyses ssDNA + n NTP = ssDNA/pppN(pN)n-1 hybrid + (n-1) diphosphate.. Functionally, RNA polymerase that catalyzes the synthesis of short RNA molecules used as primers for DNA polymerase during DNA replication. The sequence is that of DNA primase from Helicobacter pylori (strain J99 / ATCC 700824) (Campylobacter pylori J99).